A 290-amino-acid polypeptide reads, in one-letter code: Lipoyl synthase (290 aa).

[4Fe-4S] cluster is bound by residues cysteine 36, cysteine 41, cysteine 47, cysteine 62, cysteine 66, cysteine 69, and serine 275. One can recognise a Radical SAM core domain in the interval 48–264 (FSKKTATFMI…KEEALKIGFS (217 aa)).

Belongs to the radical SAM superfamily. Lipoyl synthase family. [4Fe-4S] cluster is required as a cofactor.

It localises to the cytoplasm. It catalyses the reaction [[Fe-S] cluster scaffold protein carrying a second [4Fe-4S](2+) cluster] + N(6)-octanoyl-L-lysyl-[protein] + 2 oxidized [2Fe-2S]-[ferredoxin] + 2 S-adenosyl-L-methionine + 4 H(+) = [[Fe-S] cluster scaffold protein] + N(6)-[(R)-dihydrolipoyl]-L-lysyl-[protein] + 4 Fe(3+) + 2 hydrogen sulfide + 2 5'-deoxyadenosine + 2 L-methionine + 2 reduced [2Fe-2S]-[ferredoxin]. It functions in the pathway protein modification; protein lipoylation via endogenous pathway; protein N(6)-(lipoyl)lysine from octanoyl-[acyl-carrier-protein]: step 2/2. Catalyzes the radical-mediated insertion of two sulfur atoms into the C-6 and C-8 positions of the octanoyl moiety bound to the lipoyl domains of lipoate-dependent enzymes, thereby converting the octanoylated domains into lipoylated derivatives. This chain is Lipoyl synthase, found in Alkaliphilus metalliredigens (strain QYMF).